The following is a 243-amino-acid chain: MEFIVIIPARFFSKRFPKKPLININGKPMIIHTIENAKKSGASRVIVVTDNNEIYSLVNKNGIEVLLTKKEYNSGTERLIEAIEKFKIKDNQIIVNLQVDEPFLNSDNIFNVAKKLKEKNLIVSTLAIPILNKKEIFDKNIVKVVIDINGYALYFSRSVIPWCENYNSYYIKNNFLKHVGIYAYYAKFVRLYSNYNSSKLEKMENLEQLRILWYGKRIYVSVENIKNCFSINTPSDMLNIKSF.

Belongs to the KdsB family.

The protein resides in the cytoplasm. It carries out the reaction 3-deoxy-alpha-D-manno-oct-2-ulosonate + CTP = CMP-3-deoxy-beta-D-manno-octulosonate + diphosphate. Its pathway is nucleotide-sugar biosynthesis; CMP-3-deoxy-D-manno-octulosonate biosynthesis; CMP-3-deoxy-D-manno-octulosonate from 3-deoxy-D-manno-octulosonate and CTP: step 1/1. Activates KDO (a required 8-carbon sugar) for incorporation into bacterial lipopolysaccharide in Gram-negative bacteria. The protein is 3-deoxy-manno-octulosonate cytidylyltransferase of Wigglesworthia glossinidia brevipalpis.